A 648-amino-acid polypeptide reads, in one-letter code: Macrolide export ATP-binding/permease protein MacB (648 aa).

The 239-residue stretch at 5-243 (LELKDIRRSY…TGGTEPVVNT (239 aa)) folds into the ABC transporter domain. 41 to 48 (GASGSGKS) serves as a coordination point for ATP. Transmembrane regions (helical) follow at residues 273 to 293 (LLTM…VVVG), 523 to 543 (LFLT…VMNI), 576 to 596 (AVLV…LIAF), and 611 to 631 (PLAL…FGWL).

Belongs to the ABC transporter superfamily. Macrolide exporter (TC 3.A.1.122) family. As to quaternary structure, homodimer. Part of the tripartite efflux system MacAB-TolC, which is composed of an inner membrane transporter, MacB, a periplasmic membrane fusion protein, MacA, and an outer membrane component, TolC. The complex forms a large protein conduit and can translocate molecules across both the inner and outer membranes. Interacts with MacA.

The protein resides in the cell inner membrane. In terms of biological role, part of the tripartite efflux system MacAB-TolC. MacB is a non-canonical ABC transporter that contains transmembrane domains (TMD), which form a pore in the inner membrane, and an ATP-binding domain (NBD), which is responsible for energy generation. Confers resistance against macrolides. The protein is Macrolide export ATP-binding/permease protein MacB of Escherichia coli (strain UTI89 / UPEC).